The following is a 221-amino-acid chain: Charged multivesicular body protein 3 (221 aa).

G2 carries N-myristoyl glycine lipidation. Residues 22–54 (KIRKEMRVIDRQIRDIQREEEKVKRSIKDAAKK) are a coiled coil. Important for autoinhibitory function stretches follow at residues 59 to 64 (VCIILA) and 168 to 169 (IL). A coiled-coil region spans residues 144-221 (LEDTLEGMDD…MQSRLAALRS (78 aa)). Residues 181–221 (PSKVTDLPDPVAIGATAAPEEESEEEEEIEEMQSRLAALRS) are disordered. Positions 199–211 (PEEESEEEEEIEE) are enriched in acidic residues. Positions 200 to 210 (EEESEEEEEIE) match the MIT-interacting motif motif. 2 interaction with STAMBP regions span residues 202 to 206 (ESEEE) and 220 to 221 (RS).

Belongs to the SNF7 family. In terms of assembly, probable core component of the endosomal sorting required for transport complex III (ESCRT-III). ESCRT-III components are thought to multimerize to form a flat lattice on the perimeter membrane of the endosome. Several assembly forms of ESCRT-III may exist that interact and act sequentially.

It is found in the cytoplasm. The protein localises to the cytosol. Its subcellular location is the membrane. It localises to the endosome. The protein resides in the late endosome membrane. Functionally, probable core component of the endosomal sorting required for transport complex III (ESCRT-III) which is involved in multivesicular bodies (MVBs) formation and sorting of endosomal cargo proteins into MVBs. MVBs contain intraluminal vesicles (ILVs) that are generated by invagination and scission from the limiting membrane of the endosome and mostly are delivered to lysosomes enabling degradation of membrane proteins, such as stimulated growth factor receptors, lysosomal enzymes and lipids. Involved in late stages of cytokinesis. Plays a role in endosomal sorting/trafficking of EGF receptor. This Danio rerio (Zebrafish) protein is Charged multivesicular body protein 3 (chmp3).